The following is a 67-amino-acid chain: MQVLVRDNNVDQALKALKKKLQREGVFREMKLRRHYEKPSERRAREAAEAVRRARKMERKRIEREGF.

This sequence belongs to the bacterial ribosomal protein bS21 family.

This Acidiphilium cryptum (strain JF-5) protein is Small ribosomal subunit protein bS21.